Reading from the N-terminus, the 710-residue chain is DNA topoisomerase 1 (710 aa).

Positions 1–22 (MPTSTKSKTKTTTKKKTTRKRV) are disordered. Residues 7-22 (SKTKTTTKKKTTRKRV) show a composition bias toward basic residues. The Toprim domain maps to 26-136 (KNLVIVESPA…EKNRVVFNEI (111 aa)). Positions 32 and 105 each coordinate Mg(2+). The region spanning 152 to 574 (DVDLVDAQQA…QFYKPFAKEL (423 aa)) is the Topo IA-type catalytic domain. The interval 186-191 (SAGRVQ) is interaction with DNA. Tyr321 (O-(5'-phospho-DNA)-tyrosine intermediate) is an active-site residue. 2 C4-type zinc fingers span residues 595-621 (CDVC…FPDC) and 635-663 (CPLC…YPDC). Residues 676-702 (CPKSGHFLVEKKVRGGGKQVVCSNDEC) form a C4-type 3; atypical zinc finger.

This sequence belongs to the type IA topoisomerase family. In terms of assembly, monomer. It depends on Mg(2+) as a cofactor.

The catalysed reaction is ATP-independent breakage of single-stranded DNA, followed by passage and rejoining.. Functionally, releases the supercoiling and torsional tension of DNA, which is introduced during the DNA replication and transcription, by transiently cleaving and rejoining one strand of the DNA duplex. Introduces a single-strand break via transesterification at a target site in duplex DNA. The scissile phosphodiester is attacked by the catalytic tyrosine of the enzyme, resulting in the formation of a DNA-(5'-phosphotyrosyl)-enzyme intermediate and the expulsion of a 3'-OH DNA strand. The free DNA strand then undergoes passage around the unbroken strand, thus removing DNA supercoils. Finally, in the religation step, the DNA 3'-OH attacks the covalent intermediate to expel the active-site tyrosine and restore the DNA phosphodiester backbone. In Lactococcus lactis subsp. lactis (strain IL1403) (Streptococcus lactis), this protein is DNA topoisomerase 1.